An 802-amino-acid polypeptide reads, in one-letter code: Nuclear polyadenylated RNA-binding protein 3 (802 aa).

Disordered regions lie at residues 1–174 (MSDE…RRET) and 252–293 (ALSV…RMRF). The span at 22–34 (SNSNENELMNNSS) shows a compositional bias: low complexity. The span at 37-73 (DGIEFDAPEEEREAEREEENEEQHELEDVNDEEEEDK) shows a compositional bias: acidic residues. Thr86 bears the Phosphothreonine mark. Composition is skewed to acidic residues over residues 101–139 (DDDD…EEGN) and 149–158 (AAEDGEDEED). A compositionally biased stretch (basic and acidic residues) spans 159 to 174 (KKDKTKDKEVELRRET). Over residues 260–276 (STISTTASASATSGARS) the composition is skewed to low complexity. The segment covering 277–293 (NDQRKPPLSDAQRRMRF) has biased composition (basic and acidic residues). Positions 330–401 (SRLFIGNLPL…KKLILEVSSS (72 aa)) constitute an RRM domain. At Thr451 the chain carries Phosphothreonine. Disordered regions lie at residues 571–675 (IYGA…PMDQ) and 717–802 (MQGQ…KLQK). Pro residues predominate over residues 575 to 590 (PPLPVPNGPAVGPPPQ). Low complexity predominate over residues 593–614 (YYQGYSMPPPQQQQQQPYGNYG). Over residues 632–642 (MNQSYGRYQTS) the composition is skewed to polar residues. Low complexity-rich tracts occupy residues 651–661 (QIPQGYGRYQA) and 717–738 (MQGQ…MNSS). The span at 745–754 (TNYNGQNISA) shows a compositional bias: polar residues. Pro residues predominate over residues 757–769 (SAPPMSHQPPPPQ). Residues 770 to 785 (QQQQQQQQQQQQQQQP) are compositionally biased toward low complexity.

Its subcellular location is the nucleus. The protein resides in the nucleoplasm. May be required for packaging pre-mRNAs into ribonucleoprotein structures amenable to efficient nuclear RNA processing. Binds to poly(A)+ RNA. Appears to act in the maintenance of CLN3 mRNA levels. The sequence is that of Nuclear polyadenylated RNA-binding protein 3 (NAB3) from Saccharomyces cerevisiae (strain ATCC 204508 / S288c) (Baker's yeast).